Here is a 1383-residue protein sequence, read N- to C-terminus: DNA-directed RNA polymerase subunit beta'' (1383 aa).

Residues cysteine 220, cysteine 289, cysteine 296, and cysteine 299 each coordinate Zn(2+).

The protein belongs to the RNA polymerase beta' chain family. RpoC2 subfamily. In plastids the minimal PEP RNA polymerase catalytic core is composed of four subunits: alpha, beta, beta', and beta''. When a (nuclear-encoded) sigma factor is associated with the core the holoenzyme is formed, which can initiate transcription. Zn(2+) is required as a cofactor.

The protein resides in the plastid. The protein localises to the chloroplast. The enzyme catalyses RNA(n) + a ribonucleoside 5'-triphosphate = RNA(n+1) + diphosphate. Functionally, DNA-dependent RNA polymerase catalyzes the transcription of DNA into RNA using the four ribonucleoside triphosphates as substrates. In Oenothera parviflora (Small-flowered evening primrose), this protein is DNA-directed RNA polymerase subunit beta''.